The sequence spans 607 residues: Phosphoenolpyruvate carboxykinase [GTP] (607 aa).

Substrate is bound by residues R81 and 221-223; that span reads YGG. Residues K230 and H250 each coordinate Mn(2+). Substrate is bound at residue S272. 273–278 lines the GTP pocket; the sequence is ACGKTN. C274 is a catalytic residue. D297 contacts Mn(2+). Position 388–390 (388–390) interacts with substrate; it reads NSR. GTP is bound by residues R390, R421, and 516 to 519; that span reads FGDN.

Belongs to the phosphoenolpyruvate carboxykinase [GTP] family. Monomer. Mn(2+) serves as cofactor.

It is found in the cytoplasm. It carries out the reaction oxaloacetate + GTP = phosphoenolpyruvate + GDP + CO2. Its pathway is carbohydrate biosynthesis; gluconeogenesis. Catalyzes the conversion of oxaloacetate (OAA) to phosphoenolpyruvate (PEP), the rate-limiting step in the metabolic pathway that produces glucose from lactate and other precursors derived from the citric acid cycle. The polypeptide is Phosphoenolpyruvate carboxykinase [GTP] (Renibacterium salmoninarum (strain ATCC 33209 / DSM 20767 / JCM 11484 / NBRC 15589 / NCIMB 2235)).